Reading from the N-terminus, the 658-residue chain is Aspartate--tRNA ligase, mitochondrial (658 aa).

Glu198 contacts L-aspartate. The interval 226 to 229 is aspartate; the sequence is QQYK. Arg248 lines the L-aspartate pocket. ATP-binding positions include 248–250 and Glu553; that span reads RDE. Arg560 lines the L-aspartate pocket. Residue 604–607 participates in ATP binding; it reads GFDR.

The protein belongs to the class-II aminoacyl-tRNA synthetase family. Type 1 subfamily.

It localises to the mitochondrion matrix. It carries out the reaction tRNA(Asp) + L-aspartate + ATP = L-aspartyl-tRNA(Asp) + AMP + diphosphate. Functionally, catalyzes the attachment of aspartate to tRNA(Asp) in the mitochondrion. The chain is Aspartate--tRNA ligase, mitochondrial (MSD1) from Saccharomyces cerevisiae (strain ATCC 204508 / S288c) (Baker's yeast).